Here is an 80-residue protein sequence, read N- to C-terminus: Translation initiation factor IF-1, chloroplastic (80 aa).

Positions 1–74 constitute an S1-like domain; that stretch reads MKEQKWIHEG…TRGRIIYRLR (74 aa).

The protein belongs to the IF-1 family. Component of the 30S ribosomal translation pre-initiation complex which assembles on the 30S ribosome in the order IF-2 and IF-3, IF-1 and N-formylmethionyl-tRNA(fMet); mRNA recruitment can occur at any time during PIC assembly.

The protein resides in the plastid. The protein localises to the chloroplast. Functionally, one of the essential components for the initiation of protein synthesis. Stabilizes the binding of IF-2 and IF-3 on the 30S subunit to which N-formylmethionyl-tRNA(fMet) subsequently binds. Helps modulate mRNA selection, yielding the 30S pre-initiation complex (PIC). Upon addition of the 50S ribosomal subunit IF-1, IF-2 and IF-3 are released leaving the mature 70S translation initiation complex. This is Translation initiation factor IF-1, chloroplastic from Illicium oligandrum (Star anise).